Here is a 315-residue protein sequence, read N- to C-terminus: Archaeosortase A (315 aa).

7 consecutive transmembrane segments (helical) span residues V12–A32, A47–V67, T74–G94, V173–V193, I204–L224, G227–T247, and V260–W280. Residue C177 is the Acyl-thioester intermediate of the active site. R218 functions as the Proton donor in the catalytic mechanism.

It belongs to the exosortase/archaeosortase family. Archaeosortase A subfamily.

Its subcellular location is the cell membrane. Its function is as follows. Transpeptidase that recognizes and modifies its substrate by proteolytic cleavage of a sorting signal. Following cleavage, a covalent intermediate is formed via a thioester bond between the archaeosortase and its substrate, which is then transferred and covalently attached to the cell membrane. This Natronomonas pharaonis (strain ATCC 35678 / DSM 2160 / CIP 103997 / JCM 8858 / NBRC 14720 / NCIMB 2260 / Gabara) (Halobacterium pharaonis) protein is Archaeosortase A.